The chain runs to 741 residues: uncharacterized protein (741 aa).

The signal sequence occupies residues 1-18 (MKTISILAFLVLARLIEA). 3 disordered regions span residues 142–300 (PKVE…GNVD), 423–528 (EEDE…SEQG), and 646–681 (ETVAPDTNSPDADQEQPDSVEPDNETTDAPINVEDD). Residues 147–165 (EEEEEEYDGEEDDDDESLT) are compositionally biased toward acidic residues. 2 stretches are compositionally biased toward low complexity: residues 183-197 (VEPSTTTESAISTTE) and 205-266 (STTV…SSTT). N232 and N241 each carry an N-linked (GlcNAc...) asparagine glycan. Over residues 423 to 432 (EEDEIDETET) the composition is skewed to acidic residues. Residues 433-451 (TESTKTTETTKTTGPAETT) are compositionally biased toward low complexity. 2 N-linked (GlcNAc...) asparagine glycosylation sites follow: N461 and N511. The span at 500-511 (PIDESTESEEPN) shows a compositional bias: acidic residues. The span at 512–528 (ESVTVTGDTTTDTSEQG) shows a compositional bias: low complexity. The span at 646 to 656 (ETVAPDTNSPD) shows a compositional bias: polar residues. A compositionally biased stretch (acidic residues) spans 657-671 (ADQEQPDSVEPDNET). N669 carries an N-linked (GlcNAc...) asparagine glycan. N719 carries GPI-anchor amidated asparagine lipidation. Positions 720 to 741 (AANLAGSISLSSGVLLLILMLI) are cleaved as a propeptide — removed in mature form.

It localises to the cell membrane. This is an uncharacterized protein from Candida albicans (strain SC5314 / ATCC MYA-2876) (Yeast).